We begin with the raw amino-acid sequence, 100 residues long: uncharacterized protein (100 aa).

Residues 28–45 traverse the membrane as a helical segment; the sequence is VFLVFYIITMVKIYIFLI.

It is found in the membrane. This is an uncharacterized protein from Saccharomyces cerevisiae (strain ATCC 204508 / S288c) (Baker's yeast).